The sequence spans 92 residues: UPF0223 protein SERP0684 (92 aa).

It belongs to the UPF0223 family.

The chain is UPF0223 protein SERP0684 from Staphylococcus epidermidis (strain ATCC 35984 / DSM 28319 / BCRC 17069 / CCUG 31568 / BM 3577 / RP62A).